Here is a 357-residue protein sequence, read N- to C-terminus: Guanine nucleotide-binding protein alpha-1 subunit (357 aa).

G2 carries N-myristoyl glycine lipidation. C4 carries the S-palmitoyl cysteine lipid modification. Residues 32–357 (NVIKLLLLGA…SSKLKGCGLF (326 aa)) enclose the G-alpha domain. The G1 motif stretch occupies residues 35–48 (KLLLLGAGESGKST). GTP is bound by residues E43, S44, G45, K46, S47, T48, D151, L176, T182, G204, N270, K271, D273, and A329. S47 provides a ligand contact to Mg(2+). The tract at residues 174 to 182 (DILHTRVPT) is G2 motif. T182 provides a ligand contact to Mg(2+). The interval 197–206 (FRVFDVGGQR) is G3 motif. A G4 motif region spans residues 266 to 273 (ILFLNKVD). The G5 motif stretch occupies residues 327 to 332 (TCATDT).

Belongs to the G-alpha family. G(q) subfamily. In terms of assembly, g proteins are composed of 3 units; alpha, beta and gamma. The alpha chain contains the guanine nucleotide binding site. It depends on Mg(2+) as a cofactor.

In terms of biological role, guanine nucleotide-binding proteins (G proteins) are involved as modulators or transducers in various transmembrane signaling systems. This chain is Guanine nucleotide-binding protein alpha-1 subunit (gpa-1), found in Caenorhabditis briggsae.